Reading from the N-terminus, the 144-residue chain is Large ribosomal subunit protein uL15 (144 aa).

A disordered region spans residues 1 to 53 (MRLNTLSPADGSKHAPKRLGRGIGSGLGKTGGRGHKGQNSRSGGGVRRGFEGG). The span at 21-31 (RGIGSGLGKTG) shows a compositional bias: gly residues.

This sequence belongs to the universal ribosomal protein uL15 family. In terms of assembly, part of the 50S ribosomal subunit.

Functionally, binds to the 23S rRNA. The protein is Large ribosomal subunit protein uL15 of Erwinia tasmaniensis (strain DSM 17950 / CFBP 7177 / CIP 109463 / NCPPB 4357 / Et1/99).